Reading from the N-terminus, the 808-residue chain is Phospholipase D alpha 1 (808 aa).

The region spanning 1-125 is the C2 domain; it reads MAHYLMHGTL…IRGDQVDRWV (125 aa). Aspartate 186 is a binding site for Ca(2+). Positions 326–364 constitute a PLD phosphodiesterase 1 domain; it reads TMFTHHQKIVVVDGEMPSGESQMRRIVSFVGGIDLCDGR. Catalysis depends on residues histidine 331, lysine 333, and aspartate 338. Residue histidine 331 coordinates a 1,2-diacyl-sn-glycero-3-phosphate. Ca(2+)-binding residues include histidine 370 and histidine 404. Positions 520 and 659 each coordinate a 1,2-diacyl-sn-glycero-3-phosphate. Positions 654–681 constitute a PLD phosphodiesterase 2 domain; it reads FMIYVHTKMMIVDDEYIIVGSANINQRS. Active-site residues include histidine 659, lysine 661, and aspartate 666. Glutamate 720 contributes to the Ca(2+) binding site.

The protein belongs to the phospholipase D family. C2-PLD subfamily. Ca(2+) is required as a cofactor.

It catalyses the reaction a 1,2-diacyl-sn-glycero-3-phosphocholine + H2O = a 1,2-diacyl-sn-glycero-3-phosphate + choline + H(+). Functionally, hydrolyzes glycerol-phospholipids at the terminal phosphodiesteric bond. Plays an important role in various cellular processes. The chain is Phospholipase D alpha 1 from Carica papaya (Papaya).